The sequence spans 148 residues: Major microfilarial sheath protein (148 aa).

Residues methionine 1 to alanine 18 form the signal peptide. Residues leucine 19 to alanine 43 constitute a propeptide, removed in mature form. 5 repeats span residues methionine 46–proline 50, methionine 54–proline 58, methionine 59–proline 63, methionine 64–proline 68, and methionine 71–serine 75. The segment at methionine 46 to serine 75 is repeat-rich region. Over residues glutamine 52–proline 73 the composition is skewed to pro residues. Residues glutamine 52 to valine 80 form a disordered region.

To B.pahangi filarial sheath protein. In terms of processing, O-glycosylated.

The sequence is that of Major microfilarial sheath protein (GP22) from Litomosoides carinii.